Consider the following 136-residue polypeptide: Nucleoside diphosphate kinase (136 aa).

ATP contacts are provided by K10, F58, R86, T92, R104, and N114. The active-site Pros-phosphohistidine intermediate is the H117.

This sequence belongs to the NDK family. Homotetramer. Requires Mg(2+) as cofactor.

It localises to the cytoplasm. The enzyme catalyses a 2'-deoxyribonucleoside 5'-diphosphate + ATP = a 2'-deoxyribonucleoside 5'-triphosphate + ADP. It catalyses the reaction a ribonucleoside 5'-diphosphate + ATP = a ribonucleoside 5'-triphosphate + ADP. Its function is as follows. Major role in the synthesis of nucleoside triphosphates other than ATP. The ATP gamma phosphate is transferred to the NDP beta phosphate via a ping-pong mechanism, using a phosphorylated active-site intermediate. The sequence is that of Nucleoside diphosphate kinase from Mycobacteroides abscessus (strain ATCC 19977 / DSM 44196 / CCUG 20993 / CIP 104536 / JCM 13569 / NCTC 13031 / TMC 1543 / L948) (Mycobacterium abscessus).